The sequence spans 214 residues: ATP-dependent Clp protease proteolytic subunit 3 (214 aa).

The active-site Nucleophile is the Ser-106. The active site involves His-131.

The protein belongs to the peptidase S14 family. Fourteen ClpP subunits assemble into 2 heptameric rings which stack back to back to give a disk-like structure with a central cavity, resembling the structure of eukaryotic proteasomes.

It is found in the cytoplasm. The enzyme catalyses Hydrolysis of proteins to small peptides in the presence of ATP and magnesium. alpha-casein is the usual test substrate. In the absence of ATP, only oligopeptides shorter than five residues are hydrolyzed (such as succinyl-Leu-Tyr-|-NHMec, and Leu-Tyr-Leu-|-Tyr-Trp, in which cleavage of the -Tyr-|-Leu- and -Tyr-|-Trp bonds also occurs).. Cleaves peptides in various proteins in a process that requires ATP hydrolysis. Has a chymotrypsin-like activity. Plays a major role in the degradation of misfolded proteins. This Trichormus variabilis (strain ATCC 29413 / PCC 7937) (Anabaena variabilis) protein is ATP-dependent Clp protease proteolytic subunit 3.